Consider the following 479-residue polypeptide: Polyadenylate-binding protein-interacting protein 1 (479 aa).

The tract at residues 1–114 is disordered; that stretch reads MSDGFDRAPG…PQQNSESAMA (114 aa). S2 bears the N-acetylalanine mark. The segment covering 11–33 has biased composition (gly residues); the sequence is AGRGRSRGLGRGGGGPEGGGFPN. R21 bears the Omega-N-methylarginine mark. The span at 45 to 69 shows a compositional bias: pro residues; it reads PPQPKAPGFLQPPPLRQPRTTPPPG. Over residues 98 to 111 the composition is skewed to polar residues; sequence PSSQDKIPQQNSES. The tract at residues 116–143 is PABPC1-interacting motif-2 (PAM2); sequence PQVVVAPVLMSKLSVNAPEFYPSGYSSS. The segment at 157 to 375 is PAIP1 middle domain (PAIP1M); the sequence is TLSEYVQDFL…LLKLVELRSS (219 aa). The 218-residue stretch at 159-376 folds into the MIF4G domain; it reads SEYVQDFLNH…LKLVELRSSN (218 aa). A disordered region spans residues 435-455; that stretch reads DYEENGTDLSGAGDPYLDDID. The PABPC1-interacting motif-1 (PAM1) stretch occupies residues 440–479; sequence GTDLSGAGDPYLDDIDDEMDPEIEEAYEKFCLESERKRKQ.

In terms of assembly, interacts with the RRM1-RRM2 and C-terminus regions of PABPC1 in a 1:1 stoichiometry. Interacts with EIF4A. (Microbial infection) Interacts (via PAIP1M) with human SARS coronaviruses SARS-COV and SARS-COV-2 NSP3 protein (via SARS-unique domain); the interaction increases binding affinity with PABPC1.

The protein localises to the cytoplasm. Acts as a coactivator in the regulation of translation initiation of poly(A)-containing mRNAs. Its stimulatory activity on translation is mediated via its action on PABPC1. Competes with PAIP2 for binding to PABPC1. Its association with EIF4A and PABPC1 may potentiate contacts between mRNA termini. May also be involved in translationally coupled mRNA turnover. Implicated with other RNA-binding proteins in the cytoplasmic deadenylation/translational and decay interplay of the FOS mRNA mediated by the major coding-region determinant of instability (mCRD) domain. Its function is as follows. (Microbial infection) Upon interaction with SARS coronavirus SARS-CoV NSP3 protein, plays an important role in viral protein synthesis. The chain is Polyadenylate-binding protein-interacting protein 1 from Homo sapiens (Human).